Here is an 871-residue protein sequence, read N- to C-terminus: Probable LRR receptor-like serine/threonine-protein kinase At1g51810 (871 aa).

Residues 1 to 20 form the signal peptide; it reads MERHCLFFVIFSLILHLVQA. Topologically, residues 21–512 are extracellular; the sequence is QDPIGFINLD…GRQIKSMTIP (492 aa). 11 N-linked (GlcNAc...) asparagine glycosylation sites follow: asparagine 93, asparagine 179, asparagine 229, asparagine 283, asparagine 295, asparagine 396, asparagine 410, asparagine 439, asparagine 458, asparagine 463, and asparagine 489. LRR repeat units follow at residues 405-426, 429-449, and 453-474; these read IITS…TIQN, NLQE…EFLA, and SLLV…KLIE. A helical membrane pass occupies residues 513 to 533; that stretch reads IVASIGSVVAFTVALMIFCVV. Residues 534–871 lie on the Cytoplasmic side of the membrane; it reads RKNNPSNDEA…FGTEVAPMAR (338 aa). Threonine 568 carries the phosphothreonine modification. The Protein kinase domain maps to 577–850; the sequence is NNFQKILGKG…QVVFELKECL (274 aa). ATP-binding positions include 583-591 and lysine 605; that span reads LGKGGFGIV. Tyrosine 650 is modified (phosphotyrosine). Aspartate 702 serves as the catalytic Proton acceptor. Serine 736 carries the phosphoserine modification. Threonine 737 and threonine 742 each carry phosphothreonine. Tyrosine 750 carries the phosphotyrosine modification.

Belongs to the protein kinase superfamily. Ser/Thr protein kinase family.

The protein localises to the membrane. It carries out the reaction L-seryl-[protein] + ATP = O-phospho-L-seryl-[protein] + ADP + H(+). The enzyme catalyses L-threonyl-[protein] + ATP = O-phospho-L-threonyl-[protein] + ADP + H(+). This chain is Probable LRR receptor-like serine/threonine-protein kinase At1g51810, found in Arabidopsis thaliana (Mouse-ear cress).